Consider the following 189-residue polypeptide: 3-isopropylmalate dehydratase small subunit (189 aa).

Belongs to the LeuD family. LeuD type 1 subfamily. In terms of assembly, heterodimer of LeuC and LeuD.

The enzyme catalyses (2R,3S)-3-isopropylmalate = (2S)-2-isopropylmalate. Its pathway is amino-acid biosynthesis; L-leucine biosynthesis; L-leucine from 3-methyl-2-oxobutanoate: step 2/4. In terms of biological role, catalyzes the isomerization between 2-isopropylmalate and 3-isopropylmalate, via the formation of 2-isopropylmaleate. The polypeptide is 3-isopropylmalate dehydratase small subunit (Francisella philomiragia subsp. philomiragia (strain ATCC 25017 / CCUG 19701 / FSC 153 / O#319-036)).